The primary structure comprises 619 residues: ATP-dependent zinc metalloprotease FtsH (619 aa).

Residues 1-11 lie on the Cytoplasmic side of the membrane; sequence MDKQSKFRIKT. A helical transmembrane segment spans residues 12-32; that stretch reads FFKKIIFFLIIFCFFYFFNFI. At 33–131 the chain is on the periplasmic side; the sequence is KKTKKITHTT…FKNYKIYTVL (99 aa). The chain crosses the membrane as a helical span at residues 132–152; sequence NFFYDYGFFLMIIIICWIFIF. Topologically, residues 153–619 are cytoplasmic; the sequence is RKIASRSSES…FKEDFASILD (467 aa). 224–231 contacts ATP; it reads GPPGTGKT. H447 is a binding site for Zn(2+). Residue E448 is part of the active site. Zn(2+) contacts are provided by H451 and D522.

It in the central section; belongs to the AAA ATPase family. The protein in the C-terminal section; belongs to the peptidase M41 family. As to quaternary structure, homohexamer. It depends on Zn(2+) as a cofactor.

The protein localises to the cell inner membrane. Its function is as follows. Acts as a processive, ATP-dependent zinc metallopeptidase for both cytoplasmic and membrane proteins. Plays a role in the quality control of integral membrane proteins. The chain is ATP-dependent zinc metalloprotease FtsH from Karelsulcia muelleri (strain DMIN) (Sulcia muelleri).